A 149-amino-acid polypeptide reads, in one-letter code: Small ribosomal subunit protein bS18c (149 aa).

The segment at 1–23 is disordered; it reads MDKITGPFRKSKKSFRKPLPPIQ.

The protein belongs to the bacterial ribosomal protein bS18 family. Part of the 30S ribosomal subunit.

It localises to the plastid. The polypeptide is Small ribosomal subunit protein bS18c (Cuscuta obtusiflora (Peruvian dodder)).